The following is a 537-amino-acid chain: MAWRGAGPSVPGAPGGVGLSLGLLLQLLLLLGPARGFGDEEERRCDPIRISMCQNLGYNVTKMPNLVGHELQTDAELQLTTFTPLIQYGCSSQLQFFLCSVYVPMCTEKINIPIGPCGGMCLSVKRRCEPVLKEFGFAWPESLNCSKFPPQNDHNHMCMEGPGDEEVPLPHKTPIQPGEECHSVGTNSDQYIWVKRSLNCVLKCGYDAGLYSRSAKEFTDIWMAVWASLCFISTAFTVLTFLIDSSRFSYPERPIIFLSMCYNIYSIAYIVRLTVGRERISCDFEEAAEPVLIQEGLKNTGCAIIFLLMYFFGMASSIWWVILTLTWFLAAGLKWGHEAIEMHSSYFHIAAWAIPAVKTIVILIMRLVDADELTGLCYVGNQNLDALTGFVVAPLFTYLVIGTLFIAAGLVALFKIRSNLQKDGTKTDKLERLMVKIGVFSVLYTVPATCVIACYFYEISNWALFRYSADDSNMAVEMLKIFMSLLVGITSGMWIWSAKTLHTWQKCSNRLVNSGKVKREKRGNGWVKPGKGSETVV.

The first 36 residues, 1–36 (MAWRGAGPSVPGAPGGVGLSLGLLLQLLLLLGPARG), serve as a signal peptide directing secretion. Residues 37–212 (FGDEEERRCD…KCGYDAGLYS (176 aa)) lie on the Extracellular side of the membrane. Residues 40 to 161 (EEERRCDPIR…NDHNHMCMEG (122 aa)) enclose the FZ domain. Disulfide bonds link cysteine 45–cysteine 106, cysteine 53–cysteine 99, cysteine 90–cysteine 128, cysteine 117–cysteine 158, cysteine 121–cysteine 145, cysteine 181–cysteine 200, cysteine 204–cysteine 282, and cysteine 302–cysteine 377. N-linked (GlcNAc...) asparagine glycosylation occurs at asparagine 59. Residue asparagine 144 is glycosylated (N-linked (GlcNAc...) asparagine). The helical transmembrane segment at 213–243 (RSAKEFTDIWMAVWASLCFISTAFTVLTFLI) threads the bilayer. The Cytoplasmic portion of the chain corresponds to 244–249 (DSSRFS). Residues 250 to 275 (YPERPIIFLSMCYNIYSIAYIVRLTV) traverse the membrane as a helical segment. Topologically, residues 276-299 (GRERISCDFEEAAEPVLIQEGLKN) are extracellular. Residues 300–333 (TGCAIIFLLMYFFGMASSIWWVILTLTWFLAAGL) form a helical membrane-spanning segment. The Cytoplasmic segment spans residues 334–336 (KWG). The chain crosses the membrane as a helical span at residues 337-365 (HEAIEMHSSYFHIAAWAIPAVKTIVILIM). The Extracellular portion of the chain corresponds to 366 to 383 (RLVDADELTGLCYVGNQN). A helical membrane pass occupies residues 384–418 (LDALTGFVVAPLFTYLVIGTLFIAAGLVALFKIRS). The Cytoplasmic portion of the chain corresponds to 419–431 (NLQKDGTKTDKLE). The helical transmembrane segment at 432–460 (RLMVKIGVFSVLYTVPATCVIACYFYEIS) threads the bilayer. At 461-473 (NWALFRYSADDSN) the chain is on the extracellular side. Residues 474-495 (MAVEMLKIFMSLLVGITSGMWI) traverse the membrane as a helical segment. Over 496–537 (WSAKTLHTWQKCSNRLVNSGKVKREKRGNGWVKPGKGSETVV) the chain is Cytoplasmic. A Lys-Thr-X-X-X-Trp motif, mediates interaction with the PDZ domain of Dvl family members motif is present at residues 499-504 (KTLHTW). The PDZ-binding motif lies at 535-537 (TVV).

It belongs to the G-protein coupled receptor Fz/Smo family. As to quaternary structure, interacts with MAGI3 and NDP. Component of a complex, at least composed of TSPAN12, FZD4 and norrin (NDP). Interacts (via FZ domain) with TSKU; TSKU competes with WNT2B for binding to FZD4, inhibiting Wnt signaling and repressing peripheral eye development. Interacts with glypican GPC3. Ubiquitinated by ZNRF3, leading to its degradation by the proteasome. In terms of tissue distribution, almost ubiquitous. Largely expressed in adult heart, skeletal muscle, ovary, and fetal kidney. Moderate amounts in adult liver, kidney, pancreas, spleen, and fetal lung, and small amounts in placenta, adult lung, prostate, testis, colon, fetal brain and liver.

The protein localises to the cell membrane. Receptor for Wnt proteins. Most frizzled receptors are coupled to the beta-catenin (CTNNB1) canonical signaling pathway, which leads to the activation of disheveled proteins, inhibition of GSK-3 kinase, nuclear accumulation of beta-catenin (CTNNB1) and activation of Wnt target genes. Plays a critical role in retinal vascularization by acting as a receptor for Wnt proteins and norrin (NDP). In retina, it can be activated by Wnt protein-binding and also by Wnt-independent signaling via binding of norrin (NDP), promoting in both cases beta-catenin (CTNNB1) accumulation and stimulation of LEF/TCF-mediated transcriptional programs. A second signaling pathway involving PKC and calcium fluxes has been seen for some family members, but it is not yet clear if it represents a distinct pathway or if it can be integrated in the canonical pathway, as PKC seems to be required for Wnt-mediated inactivation of GSK-3 kinase. Both pathways seem to involve interactions with G-proteins. May be involved in transduction and intercellular transmission of polarity information during tissue morphogenesis and/or in differentiated tissues. This is Frizzled-4 (FZD4) from Homo sapiens (Human).